Reading from the N-terminus, the 126-residue chain is Holo-[acyl-carrier-protein] synthase (126 aa).

Mg(2+) contacts are provided by Asp9 and Glu59.

This sequence belongs to the P-Pant transferase superfamily. AcpS family. Mg(2+) is required as a cofactor.

It is found in the cytoplasm. It catalyses the reaction apo-[ACP] + CoA = holo-[ACP] + adenosine 3',5'-bisphosphate + H(+). In terms of biological role, transfers the 4'-phosphopantetheine moiety from coenzyme A to a Ser of acyl-carrier-protein. The protein is Holo-[acyl-carrier-protein] synthase of Myxococcus xanthus (strain DK1622).